A 710-amino-acid polypeptide reads, in one-letter code: DNA-directed RNA polymerase III subunit RPC5 (710 aa).

Over residues 146-155 (DAKHREREAA) the composition is skewed to basic and acidic residues. The tract at residues 146 to 169 (DAKHREREAANEAGDSSQDEAEED) is disordered. Ser161 and Ser162 each carry phosphoserine. Residue Lys171 forms a Glycyl lysine isopeptide (Lys-Gly) (interchain with G-Cter in SUMO2) linkage. Ser192 is subject to Phosphoserine. Position 224 is a phosphotyrosine (Tyr224). Residue Lys432 forms a Glycyl lysine isopeptide (Lys-Gly) (interchain with G-Cter in SUMO2) linkage. Lys498 participates in a covalent cross-link: Glycyl lysine isopeptide (Lys-Gly) (interchain with G-Cter in SUMO1); alternate. Lys498 is covalently cross-linked (Glycyl lysine isopeptide (Lys-Gly) (interchain with G-Cter in SUMO2); alternate). A disordered region spans residues 498-526 (KEEPLSEEEADGAELEAEEEEPMDTAPST). Acidic residues predominate over residues 502 to 520 (LSEEEADGAELEAEEEEPM). Residue Ser503 is modified to Phosphoserine. Positions 558-710 (NPVACELKAF…MWYLKGTVQS (153 aa)) are required for Pol III complex stability. A Glycyl lysine isopeptide (Lys-Gly) (interchain with G-Cter in SUMO2) cross-link involves residue Lys661.

Component of the RNA polymerase III complex consisting of at least 17 subunits: a ten-subunit horseshoe-shaped catalytic core composed of POLR3A/RPC1, POLR3B/RPC2, POLR1C/RPAC1, POLR1D/RPAC2, POLR3K/RPC10, POLR2E/RPABC1, POLR2F/RPABC2, POLR2H/RPABC3, POLR2K/RPABC4 and POLR2L/RPABC5; the stalk composed of two subunits POLR3H/RPC8 and CRCP/RPC9, forming a structural mobile part that protrudes out of the core and functions primarily in transcription initiation; and additional subunits homologous to general transcription factors of the RNA polymerase II machinery, POLR3D/RPC4-POLR3E/RPC5 heterodimer and POLR3/CRPC3-POLR3F/RPC6-POLR3G/RPC7 heterotrimer.

It is found in the nucleus. Its function is as follows. DNA-dependent RNA polymerase catalyzes the transcription of DNA into RNA using the four ribonucleoside triphosphates as substrates. Specific peripheric component of RNA polymerase III (Pol III) which synthesizes small non-coding RNAs including 5S rRNA, snRNAs, tRNAs and miRNAs from at least 500 distinct genomic loci. Assembles with POLR3D/RPC4 forming a subcomplex that binds the Pol III core. Enables recruitment of Pol III at transcription initiation site and drives transcription initiation from both type 2 and type 3 DNA promoters. Required for efficient transcription termination and reinitiation. Plays a key role in sensing and limiting infection by intracellular bacteria and DNA viruses. Acts as a nuclear and cytosolic DNA sensor involved in innate immune response. Can sense non-self dsDNA that serves as template for transcription into dsRNA. The non-self RNA polymerase III transcripts, such as Epstein-Barr virus-encoded RNAs (EBERs) induce type I interferon and NF-kappa-B through the RIG-I pathway. The polypeptide is DNA-directed RNA polymerase III subunit RPC5 (Mus musculus (Mouse)).